The chain runs to 1040 residues: Beta-galactosidase (1040 aa).

The substrate site is built by Asn-111 and Asp-210. Asp-210 serves as a coordination point for Na(+). Glu-427, His-429, and Glu-472 together coordinate Mg(2+). Substrate-binding positions include Glu-472 and 548-551 (EYAH). Glu-472 (proton donor) is an active-site residue. The active-site Nucleophile is the Glu-548. Position 608 (Asn-608) interacts with Mg(2+). The Na(+) site is built by Phe-612 and Asp-615. Substrate is bound by residues Asp-615 and Trp-1016.

This sequence belongs to the glycosyl hydrolase 2 family. In terms of assembly, homotetramer. The cofactor is Mg(2+). Na(+) is required as a cofactor.

The catalysed reaction is Hydrolysis of terminal non-reducing beta-D-galactose residues in beta-D-galactosides.. The protein is Beta-galactosidase of Pectobacterium atrosepticum (strain SCRI 1043 / ATCC BAA-672) (Erwinia carotovora subsp. atroseptica).